Consider the following 264-residue polypeptide: NAD-capped RNA hydrolase NudC (264 aa).

Position 70 (Arg70) interacts with substrate. Zn(2+) contacts are provided by Cys99 and Cys102. Glu112 is a substrate binding site. The Zn(2+) site is built by Cys117 and Cys122. Tyr127 contacts substrate. Residues 128–252 (PVICPCIIVA…TIALKLIEHT (125 aa)) form the Nudix hydrolase domain. A divalent metal cation contacts are provided by Ala161, Glu177, and Glu181. The Nudix box signature appears at 162–183 (GFVEVGETFEQAVHREVLEETG). Residue 195 to 202 (QPWAFPNS) coordinates substrate. Glu222 serves as a coordination point for a divalent metal cation. Ala245 serves as a coordination point for substrate.

This sequence belongs to the Nudix hydrolase family. NudC subfamily. As to quaternary structure, homodimer. Requires Mg(2+) as cofactor. The cofactor is Mn(2+). Zn(2+) is required as a cofactor.

The enzyme catalyses a 5'-end NAD(+)-phospho-ribonucleoside in mRNA + H2O = a 5'-end phospho-adenosine-phospho-ribonucleoside in mRNA + beta-nicotinamide D-ribonucleotide + 2 H(+). It carries out the reaction NAD(+) + H2O = beta-nicotinamide D-ribonucleotide + AMP + 2 H(+). It catalyses the reaction NADH + H2O = reduced beta-nicotinamide D-ribonucleotide + AMP + 2 H(+). MRNA decapping enzyme that specifically removes the nicotinamide adenine dinucleotide (NAD) cap from a subset of mRNAs by hydrolyzing the diphosphate linkage to produce nicotinamide mononucleotide (NMN) and 5' monophosphate mRNA. The NAD-cap is present at the 5'-end of some mRNAs and stabilizes RNA against 5'-processing. Has preference for mRNAs with a 5'-end purine. Catalyzes the hydrolysis of a broad range of dinucleotide pyrophosphates. In Pasteurella multocida (strain Pm70), this protein is NAD-capped RNA hydrolase NudC.